A 229-amino-acid polypeptide reads, in one-letter code: Uracil-DNA glycosylase (229 aa).

Asp65 serves as the catalytic Proton acceptor.

It belongs to the uracil-DNA glycosylase (UDG) superfamily. UNG family.

It localises to the cytoplasm. It carries out the reaction Hydrolyzes single-stranded DNA or mismatched double-stranded DNA and polynucleotides, releasing free uracil.. Its function is as follows. Excises uracil residues from the DNA which can arise as a result of misincorporation of dUMP residues by DNA polymerase or due to deamination of cytosine. The chain is Uracil-DNA glycosylase from Limosilactobacillus reuteri (strain DSM 20016) (Lactobacillus reuteri).